A 312-amino-acid polypeptide reads, in one-letter code: Tetraacyldisaccharide 4'-kinase (312 aa).

60 to 67 is an ATP binding site; the sequence is IAGGSGKT.

It belongs to the LpxK family.

The catalysed reaction is a lipid A disaccharide + ATP = a lipid IVA + ADP + H(+). The protein operates within glycolipid biosynthesis; lipid IV(A) biosynthesis; lipid IV(A) from (3R)-3-hydroxytetradecanoyl-[acyl-carrier-protein] and UDP-N-acetyl-alpha-D-glucosamine: step 6/6. Transfers the gamma-phosphate of ATP to the 4'-position of a tetraacyldisaccharide 1-phosphate intermediate (termed DS-1-P) to form tetraacyldisaccharide 1,4'-bis-phosphate (lipid IVA). This is Tetraacyldisaccharide 4'-kinase from Helicobacter pylori (strain ATCC 700392 / 26695) (Campylobacter pylori).